A 251-amino-acid polypeptide reads, in one-letter code: Ubiquinone/menaquinone biosynthesis C-methyltransferase UbiE (251 aa).

Residues T74, D95, 123-124 (NA), and S140 each bind S-adenosyl-L-methionine.

Belongs to the class I-like SAM-binding methyltransferase superfamily. MenG/UbiE family.

The catalysed reaction is a 2-demethylmenaquinol + S-adenosyl-L-methionine = a menaquinol + S-adenosyl-L-homocysteine + H(+). It catalyses the reaction a 2-methoxy-6-(all-trans-polyprenyl)benzene-1,4-diol + S-adenosyl-L-methionine = a 5-methoxy-2-methyl-3-(all-trans-polyprenyl)benzene-1,4-diol + S-adenosyl-L-homocysteine + H(+). It functions in the pathway quinol/quinone metabolism; menaquinone biosynthesis; menaquinol from 1,4-dihydroxy-2-naphthoate: step 2/2. The protein operates within cofactor biosynthesis; ubiquinone biosynthesis. Methyltransferase required for the conversion of demethylmenaquinol (DMKH2) to menaquinol (MKH2) and the conversion of 2-polyprenyl-6-methoxy-1,4-benzoquinol (DDMQH2) to 2-polyprenyl-3-methyl-6-methoxy-1,4-benzoquinol (DMQH2). The sequence is that of Ubiquinone/menaquinone biosynthesis C-methyltransferase UbiE from Escherichia fergusonii (strain ATCC 35469 / DSM 13698 / CCUG 18766 / IAM 14443 / JCM 21226 / LMG 7866 / NBRC 102419 / NCTC 12128 / CDC 0568-73).